Consider the following 1134-residue polypeptide: Translation initiation factor IF-2 (1134 aa).

Disordered regions lie at residues 55-465 (AQKS…HIIG) and 491-524 (LARP…QRQR). Composition is skewed to polar residues over residues 56 to 65 (QKSSNSSSPP), 83 to 105 (SPPT…SSLK), 137 to 147 (PSISKNNSLKV), 208 to 234 (QIKQ…IQTN), and 251 to 264 (VQSQ…NNNL). Basic and acidic residues-rich tracts occupy residues 391-403 (KRGD…KKDG) and 438-450 (PDWD…EALR). Composition is skewed to basic residues over residues 495–504 (GKPKASKKSG) and 511–524 (LRKR…QRQR). One can recognise a tr-type G domain in the interval 626-798 (RRPPVVTVMG…ILLVTEVEDL (173 aa)). Positions 635-642 (GHVDHGKT) are G1. Residue 635–642 (GHVDHGKT) coordinates GTP. The G2 stretch occupies residues 660 to 664 (GITQH). Positions 685 to 688 (DTPG) are G3. Residues 685–689 (DTPGH) and 739–742 (NKID) contribute to the GTP site. Positions 739–742 (NKID) are G4. Residues 775 to 777 (SAI) are G5.

Belongs to the TRAFAC class translation factor GTPase superfamily. Classic translation factor GTPase family. IF-2 subfamily.

Its subcellular location is the cytoplasm. One of the essential components for the initiation of protein synthesis. Protects formylmethionyl-tRNA from spontaneous hydrolysis and promotes its binding to the 30S ribosomal subunits. Also involved in the hydrolysis of GTP during the formation of the 70S ribosomal complex. In Prochlorococcus marinus (strain SARG / CCMP1375 / SS120), this protein is Translation initiation factor IF-2.